We begin with the raw amino-acid sequence, 102 residues long: UPF0213 protein Ent638_3592 (102 aa).

In terms of domain architecture, GIY-YIG spans 4-79; sequence VCWFLYLVRT…KQLTKRQKER (76 aa).

It belongs to the UPF0213 family.

The polypeptide is UPF0213 protein Ent638_3592 (Enterobacter sp. (strain 638)).